The following is a 265-amino-acid chain: MTTIKVVKICGAMESRGLNPLDHLPPPASSNKPLTPFSITDILSKPTVKRFHRIHRLPASDRVRQSITVSRQTLITQASPLCALQELASKTFKGLELGVLQAAEGKDGLKLFGQRDSPKKRRKSRTAFTNHQLYELEKRFLHQKYLSPADRDQIAHQLGLTNAQVITWFQNRRAKLKRDLEEMKADVESVRSTGLVPLDKLAKLADLERCAAAGATGNPGPQCSPRLGHEYKTVHKLCLSPMSSLSDHTSQDCSEDEEVEIDVDV.

The segment at residues 121–180 is a DNA-binding region (homeobox); the sequence is RRKSRTAFTNHQLYELEKRFLHQKYLSPADRDQIAHQLGLTNAQVITWFQNRRAKLKRDL.

It is found in the nucleus. Its function is as follows. Transcription factor required for the development of hypaxial muscles. In Danio rerio (Zebrafish), this protein is Transcription factor LBX1b.